We begin with the raw amino-acid sequence, 379 residues long: RIB43A-like with coiled-coils protein 1 (379 aa).

Positions 1–21 (MYNIKQSTDTKEAAAIEARRN) are disordered. A compositionally biased stretch (basic and acidic residues) spans 8–21 (TDTKEAAAIEARRN). Coiled coils occupy residues 82–111 (KEEA…GREF) and 216–304 (NANK…QAEK).

The protein belongs to the RIB43A family. In terms of assembly, microtubule inner protein component of sperm flagellar doublet microtubules.

It is found in the cytoplasm. The protein resides in the cytoskeleton. The protein localises to the flagellum axoneme. The protein is RIB43A-like with coiled-coils protein 1 (RIBC1) of Homo sapiens (Human).